The chain runs to 378 residues: Protein arginine N-methyltransferase 6 (378 aa).

The tract at residues 1 to 46 (MSLSKKRKLESGDSGGAGAGGEGAEEENGGEQEAAPPRPRRTKSER) is disordered. Residues 13–22 (DSGGAGAGGE) show a composition bias toward gly residues. Position 38 is an asymmetric dimethylarginine; by autocatalysis (Arg-38). The region spanning 47–377 (DQLYYECYSD…EEKTKDFAME (331 aa)) is the SAM-dependent MTase PRMT-type domain. S-adenosyl-L-methionine-binding residues include His-60, Arg-69, Gly-93, Glu-115, and Glu-144. Catalysis depends on residues Glu-158 and Glu-167.

Belongs to the class I-like SAM-binding methyltransferase superfamily. Protein arginine N-methyltransferase family. PRMT6 subfamily. In terms of assembly, interacts with (and methylates) HIV-1 Tat, Rev and Nucleocapsid protein p7 (NC). Interacts with EPB41L3 and NCOA1. In terms of processing, automethylation enhances its stability.

Its subcellular location is the nucleus. The enzyme catalyses L-arginyl-[protein] + 2 S-adenosyl-L-methionine = N(omega),N(omega)-dimethyl-L-arginyl-[protein] + 2 S-adenosyl-L-homocysteine + 2 H(+). Arginine methyltransferase that can catalyze the formation of both omega-N monomethylarginine (MMA) and asymmetrical dimethylarginine (aDMA), with a strong preference for the formation of aDMA. Preferentially methylates arginyl residues present in a glycine and arginine-rich domain and displays preference for monomethylated substrates. Specifically mediates the asymmetric dimethylation of histone H3 'Arg-2' to form H3R2me2a. H3R2me2a represents a specific tag for epigenetic transcriptional repression and is mutually exclusive with methylation on histone H3 'Lys-4' (H3K4me2 and H3K4me3). Acts as a transcriptional repressor of various genes such as HOXA2, THBS1 and TP53. Repression of TP53 blocks cellular senescence. Also methylates histone H2A and H4 'Arg-3' (H2AR3me and H4R3me, respectively). Acts as a regulator of DNA base excision during DNA repair by mediating the methylation of DNA polymerase beta (POLB), leading to the stimulation of its polymerase activity by enhancing DNA binding and processivity. Methylates HMGA1. Regulates alternative splicing events. Acts as a transcriptional coactivator of a number of steroid hormone receptors including ESR1, ESR2, PGR and NR3C1. Promotes fasting-induced transcriptional activation of the gluconeogenic program through methylation of the CRTC2 transcription coactivator. Methylates GPS2, protecting GPS2 from ubiquitination and degradation. Methylates SIRT7, inhibiting SIRT7 histone deacetylase activity and promoting mitochondria biogenesis. In Mus musculus (Mouse), this protein is Protein arginine N-methyltransferase 6 (Prmt6).